The chain runs to 853 residues: MKSLSLTWITAVAVVLYLVQRYVRSYWRLKDIPGPVLAKLTDLQRVWWVKTGRAHEFHRDMHAMYGPIVRFGPNMVSVSDPRVIPTIYPSRPGFPKGDFYRTQKPYTRNKGAMPAVFNTQDEDLHKQLRSPIASLYSMTNVVRLEPLVDETLTVLSKQLDERFVGTNDKPFDLGDWLQYFAFDSMGTLTFSRRYGFLEQGRDMHGILQEIWNFMTRVAVMGQIPWFDEIWNKNSFITLFKRPTGFGVLKVVDNFISQRVSSRENDEKADEKDMLSQFLDIQASNPHSIMPWAPRAWTFSNVMAGSDSTANVMRTMMYNLLVDRDTLRSLRAELLEAENSNGLSRSLPSWDGVRSLPYLDACVLEALRLHPPFCLPFERVVPEGGITVCETYLPAGTVVGISPYLANRDKQTFGDDADKWRPSRWLDLSREDRVKLENSILTFGAGRRTCLGKNIAILEIKKLFPMLLLNYEIEIVNPENYQTTNAWFFRQWGLQAVIRKLPAPERDDTIEQKASIPPALNIPPSSSTVEVRIIDSGTLLDLRPDLFWTPDLPGLLKVTAPTYCFLISNGTRHVLFDLAVRQDWENLPPSIVAMIKSQTVIQEPRNISDVLDSDESSLGVRSKDIEAIIWSHAHFDHIGDPSTFPPSTELVVGPGIRDTHWPGFPTNPDAINLNTDIQGRNVREISFEKTQKGATKIGSFDAVDYFGDGSFYLLDAAGHSVGHIGALARVTTSPVSFVFMGGDSCHHAGVLRPTKYLPCPLDSGDTSLPCKSDSVFTLSPALPTDYTAALRTVENIKELDACEDVFVVLAHDATLKGKVDFYPSKINDWKAKEYGKKTKWLFYKDIENSIEGQK.

At 1–6 (MKSLSL) the chain is on the lumenal side. A helical membrane pass occupies residues 7–29 (TWITAVAVVLYLVQRYVRSYWRL). Over 30-853 (KDIPGPVLAK…DIENSIEGQK (824 aa)) the chain is Cytoplasmic. Residue C449 participates in heme binding.

The protein belongs to the cytochrome P450 family. Requires heme as cofactor.

It is found in the endoplasmic reticulum membrane. It catalyses the reaction 5-methylorsellinate + reduced [NADPH--hemoprotein reductase] + O2 = 4,6-dihydroxy-2-(hydroxymethyl)-3-methylbenzoate + oxidized [NADPH--hemoprotein reductase] + H2O + H(+). The catalysed reaction is 4,6-dihydroxy-2-(hydroxymethyl)-3-methylbenzoate + H(+) = 5,7-dihydroxy-4-methylphthalide + H2O. It participates in secondary metabolite biosynthesis; terpenoid biosynthesis. In terms of biological role, cytochrome P450 monooxygenase; part of the gene cluster that mediates the biosynthesis of mycophenolic acid (MPA), the first isolated antibiotic natural product in the world obtained from a culture of Penicillium brevicompactum in 1893. MpaDE is an endoplasmic reticulum-bound enzyme that catalyzes the conversion of 5-methylorsellinic acid (5MOA) into the phthalide compound 5,7-dihydroxy-4,6-dimethylphthalide (DHMP). MpaDE first catalyzes hydroxylation of 5-MOA to 4,6-dihydroxy-2-(hydroxymethyl)-3-methylbenzoic acid (DHMB), and then acts as a lactone synthase that catalyzes the ring closure to convert DHMB into DHMP. The first step of the pathway is the synthesis of 5-methylorsellinic acid (5MOA) by the cytosolic polyketide synthase mpaC. 5MOA is then converted to the phthalide compound 5,7-dihydroxy-4,6-dimethylphthalide (DHMP) by the endoplasmic reticulum-bound cytochrome P450 monooxygenase mpaDE. MpaDE first catalyzes hydroxylation of 5-MOA to 4,6-dihydroxy-2-(hydroxymethyl)-3-methylbenzoic acid (DHMB). MpaDE then acts as a lactone synthase that catalyzes the ring closure to convert DHMB into DHMP. The next step is the prenylation of DHMP by the Golgi apparatus-associated prenyltransferase mpaA to yield farnesyl-DHMP (FDHMP). The ER-bound oxygenase mpaB then mediates the oxidative cleavage the C19-C20 double bond in FDHMP to yield FDHMP-3C via a mycophenolic aldehyde intermediate. The O-methyltransferase mpaG catalyzes the methylation of FDHMP-3C to yield MFDHMP-3C. After the cytosolic methylation of FDHMP-3C, MFDHMP-3C enters into peroxisomes probably via free diffusion due to its low molecular weight. Upon a peroxisomal CoA ligation reaction, catalyzed by a beta-oxidation component enzyme acyl-CoA ligase ACL891, MFDHMP-3C-CoA would then be restricted to peroxisomes for the following beta-oxidation pathway steps. The peroxisomal beta-oxidation machinery than converts MFDHMP-3C-CoA into MPA_CoA, via a beta-oxidation chain-shortening process. Finally mpaH acts as a peroxisomal acyl-CoA hydrolase with high substrate specificity toward MPA-CoA to release the final product MPA. The chain is Cytochrome P450 monooxygenase mpaDE from Penicillium brevicompactum.